The chain runs to 388 residues: Succinate--CoA ligase [ADP-forming] subunit beta (388 aa).

In terms of domain architecture, ATP-grasp spans K9–E244. Residues K46, G53–G55, E99, L102, and E107 each bind ATP. 2 residues coordinate Mg(2+): N199 and D213. Residues N265 and G322 to L324 each bind substrate.

The protein belongs to the succinate/malate CoA ligase beta subunit family. As to quaternary structure, heterotetramer of two alpha and two beta subunits. The cofactor is Mg(2+).

The enzyme catalyses succinate + ATP + CoA = succinyl-CoA + ADP + phosphate. It catalyses the reaction GTP + succinate + CoA = succinyl-CoA + GDP + phosphate. Its pathway is carbohydrate metabolism; tricarboxylic acid cycle; succinate from succinyl-CoA (ligase route): step 1/1. Its function is as follows. Succinyl-CoA synthetase functions in the citric acid cycle (TCA), coupling the hydrolysis of succinyl-CoA to the synthesis of either ATP or GTP and thus represents the only step of substrate-level phosphorylation in the TCA. The beta subunit provides nucleotide specificity of the enzyme and binds the substrate succinate, while the binding sites for coenzyme A and phosphate are found in the alpha subunit. The polypeptide is Succinate--CoA ligase [ADP-forming] subunit beta (Syntrophobacter fumaroxidans (strain DSM 10017 / MPOB)).